The sequence spans 275 residues: 4-diphosphocytidyl-2-C-methyl-D-erythritol kinase (275 aa).

Lys14 is a catalytic residue. Residue 98 to 108 (PMGAGLGGGSS) participates in ATP binding. The active site involves Asp140.

The protein belongs to the GHMP kinase family. IspE subfamily.

It carries out the reaction 4-CDP-2-C-methyl-D-erythritol + ATP = 4-CDP-2-C-methyl-D-erythritol 2-phosphate + ADP + H(+). It participates in isoprenoid biosynthesis; isopentenyl diphosphate biosynthesis via DXP pathway; isopentenyl diphosphate from 1-deoxy-D-xylulose 5-phosphate: step 3/6. Catalyzes the phosphorylation of the position 2 hydroxy group of 4-diphosphocytidyl-2C-methyl-D-erythritol. The chain is 4-diphosphocytidyl-2-C-methyl-D-erythritol kinase from Francisella tularensis subsp. novicida (strain U112).